Consider the following 400-residue polypeptide: Acetyl-CoA decarbonylase/synthase complex subunit delta (400 aa).

Belongs to the CdhD family. Heterodimer of delta and gamma chains. The ACDS complex is made up of alpha, epsilon, beta, gamma and delta chains with a probable stoichiometry of (alpha(2)epsilon(2))(4)-beta(8)-(gamma(1)delta(1))(8).

Functionally, part of a complex that catalyzes the reversible cleavage of acetyl-CoA, allowing autotrophic growth from CO(2). Probably maintains the overall quaternary structure of the ACDS complex. In Methanopyrus kandleri (strain AV19 / DSM 6324 / JCM 9639 / NBRC 100938), this protein is Acetyl-CoA decarbonylase/synthase complex subunit delta.